We begin with the raw amino-acid sequence, 8545 residues long: Nuclear anchorage protein 1 (8545 aa).

The tract at residues Met1–Arg325 is actin-binding. Residues Met1 to Arg8494 are Cytoplasmic-facing. A Calponin-homology (CH) 1 domain is found at Lys23–Gln130. Residues Thr148–Pro197 form a disordered region. Residues Val159–Gly190 show a composition bias toward low complexity. Positions Gln222 to Gly328 constitute a Calponin-homology (CH) 2 domain. 19 coiled-coil regions span residues Asn754–Arg774, Ser1072–His1101, Ala1215–Ala1236, Asp1324–Asp1384, Arg1574–Lys1629, Glu1725–Ala1754, Pro1950–Gln1981, Asp2103–Asp2580, Ser2682–Lys2712, Ile2852–Lys2949, Asp3002–Val3119, Asp3178–Lys3295, Gln3346–Asp3417, Asp3482–Leu3552, Lys3587–Asp3703, Ala3781–Leu3839, Ala3902–Val4022, Leu4114–Lys4198, and Gln4249–Asp4320. A compositionally biased stretch (basic and acidic residues) spans Glu3010–Ser3019. The tract at residues Glu3010–Glu3033 is disordered. 6 repeat units span residues Gln3241–Pro4143, Gln4144–Pro5097, Gln5098–Pro6000, Gln6001–Pro6903, Gln6904–Pro7806, and Gln7807–Ala8199. The 6 X tandem repeat stretch occupies residues Gln3241–Ala8199. Residues Glu3913–Ser3922 show a composition bias toward basic and acidic residues. The segment at Glu3913–Glu3936 is disordered. A compositionally biased stretch (basic and acidic residues) spans Ile4372–Arg4393. Residues Ile4372–Thr4395 are disordered. Coiled coils occupy residues Asp4436–Leu4506, Lys4541–Asp4657, Ala4735–Leu4793, Ala4856–Val4976, Asp5035–Lys5152, Gln5203–Asp5274, Asp5339–Leu5409, Lys5444–Asp5560, Ala5638–Leu5696, Ala5759–Val5879, Asp5938–Lys6055, Gln6106–Asp6177, Asp6242–Leu6312, Lys6347–Asp6463, Ala6541–Leu6599, Ala6662–Val6782, Asp6841–Lys6958, Gln7009–Asp7080, Asp7145–Leu7215, Lys7250–Asp7366, Ala7444–Leu7502, Ala7565–Val7685, Asp7744–Lys7861, Gln7912–Asp7983, Asp8048–Leu8118, Lys8153–Arg8204, Val8273–Asn8329, and Ser8370–Glu8390. A compositionally biased stretch (basic and acidic residues) spans Glu4867–Ser4876. Positions Glu4867–Glu4890 are disordered. Residues Glu5770–Ser5779 show a composition bias toward basic and acidic residues. The disordered stretch occupies residues Glu5770–Glu5793. Residues Glu6673 to Ser6682 show a composition bias toward basic and acidic residues. The tract at residues Glu6673–Glu6696 is disordered. The span at Glu7576–Ser7585 shows a compositional bias: basic and acidic residues. The tract at residues Glu7576 to Glu7599 is disordered. Disordered stretches follow at residues Pro8391–Asp8418 and Ser8449–Glu8480. Positions Asp8401 to Gly8411 are enriched in acidic residues. Residues Ser8451 to Ser8464 show a composition bias toward basic and acidic residues. One can recognise a KASH domain in the interval Arg8486–Phe8545. Residues Thr8495–Val8513 traverse the membrane as a helical; Anchor for type IV membrane protein segment. At Pro8514–Phe8545 the chain is on the perinuclear space side.

This sequence belongs to the nesprin family. In terms of assembly, interacts with F-actin via its N-terminal domain. Most likely interacts with unc-84; the interaction is probably required to recruit anc-1 to the nuclear envelope. In terms of tissue distribution, ubiquitously expressed in all postembryonic cells.

It is found in the nucleus outer membrane. It localises to the cytoplasm. Its subcellular location is the cytoskeleton. In terms of biological role, plays a central role in nuclear and mitochondrial anchoring. Probably connects nuclei to the cytoskeleton by interacting with unc-84 at the nuclear envelope and with F-actin in the cytoplasm, creating a bridge across the nuclear envelope between the cytoskeleton and the nucleus. Has a role in positioning of the cell body of the PVQ lumbar interneuron. The chain is Nuclear anchorage protein 1 from Caenorhabditis elegans.